Consider the following 965-residue polypeptide: Klaroid protein (965 aa).

The tract at residues 1 to 20 is disordered; it reads MSENTYQIETRRRSRSKTPF. 2 helical membrane-spanning segments follow: residues 303 to 323 and 343 to 363; these read TIGG…GSVL and FLIF…LLLQ. The stretch at 585–612 forms a coiled coil; it reads SSDAEVQIERLNREIAFIKLALSDKQAE. Residues 801–963 form the SUN domain; sequence GGQILSTRCT…YRFRVHGKPP (163 aa).

Core component of the LINC complex which is composed of inner nuclear membrane SUN domain-containing proteins coupled to outer nuclear membrane KASH domain-containing nesprins. As to expression, expressed in all cells in the eye disk.

The protein resides in the membrane. The protein localises to the cytoplasm. It is found in the cytoskeleton. Its subcellular location is the microtubule organizing center. It localises to the perinuclear region. Functionally, component of the LINC (LInker of Nucleoskeleton and Cytoskeleton) complex involved in the connection between the nuclear lamina and the cytoskeleton. Is required to nuclear migration in eye and to anchor klar in the nuclear membrane. The sequence is that of Klaroid protein from Drosophila melanogaster (Fruit fly).